A 433-amino-acid chain; its full sequence is Phosphomethylpyrimidine synthase 1 (433 aa).

Residues M95, Y124, H163, 185–187 (SRG), 226–229 (NAMR), and E265 each bind substrate. H269 is a binding site for Zn(2+). Y292 serves as a coordination point for substrate. H333 is a binding site for Zn(2+). Residues C408, C411, and C415 each coordinate [4Fe-4S] cluster.

It belongs to the ThiC family. The cofactor is [4Fe-4S] cluster.

It catalyses the reaction 5-amino-1-(5-phospho-beta-D-ribosyl)imidazole + S-adenosyl-L-methionine = 4-amino-2-methyl-5-(phosphooxymethyl)pyrimidine + CO + 5'-deoxyadenosine + formate + L-methionine + 3 H(+). It participates in cofactor biosynthesis; thiamine diphosphate biosynthesis. Catalyzes the synthesis of the hydroxymethylpyrimidine phosphate (HMP-P) moiety of thiamine from aminoimidazole ribotide (AIR) in a radical S-adenosyl-L-methionine (SAM)-dependent reaction. The chain is Phosphomethylpyrimidine synthase 1 from Methanothermobacter thermautotrophicus (strain ATCC 29096 / DSM 1053 / JCM 10044 / NBRC 100330 / Delta H) (Methanobacterium thermoautotrophicum).